The chain runs to 486 residues: MQVGEEMASLTKIACPIVMTSLLIFSRSIISMWFLSHLGKVELAGGALAMGFGNITGVSVLKGLSVGMDPICGQAFGAKRWTVLSHTFQKMFCLLIVVSVPIAVTWLNIEPIFLRLGQDPDITKVAKTYMLFFVPELLAQAMLHPLRTFLRTQGLTSPLTISAIVSILLHPLFNYVFVVRMRLGVKGVAIAMAFNTMNIDVGLLVYTCFSDSLIKPWEGLALRSLFRGWWPLLSLAAPSAISVCLEYWWYEIMLFLCGLLGNPKASVAAMGILIQTTGILYVVPFAISSAIATRVGHALGGGQPTRAQCTTVIGLILAVAYGLAAAVFVTALRSVWGKMFTDEPEILGLISAALPILGLCEIGNSPQTAACGVLTGTARPKDGARVNLCAFYIVGLPVAVTTTFGFKVGFRGLWFGLLSAQMTCLVMMLYTLIRTDWSHQVKRAEELTSAAADKSHSEDETVHAEVQDDDDVSSNDLEIGLLQNTN.

Helical transmembrane passes span 15–35 (CPIV…MWFL), 45–65 (GGAL…KGLS), 94–114 (LLIV…PIFL), 130–150 (MLFF…RTFL), 159–179 (LTIS…VFVV), 187–207 (GVAI…LVYT), 240–260 (AISV…CGLL), 267–287 (VAAM…PFAI), 312–332 (VIGL…VTAL), 346–366 (ILGL…GNSP), 386–406 (VNLC…TFGF), and 413–433 (LWFG…YTLI). The tract at residues 448 to 474 (TSAAADKSHSEDETVHAEVQDDDDVSS) is disordered. Basic and acidic residues predominate over residues 453 to 466 (DKSHSEDETVHAEV).

This sequence belongs to the multi antimicrobial extrusion (MATE) (TC 2.A.66.1) family.

The protein resides in the membrane. This Arabidopsis thaliana (Mouse-ear cress) protein is Protein DETOXIFICATION 53.